A 129-amino-acid polypeptide reads, in one-letter code: Glycine cleavage system H protein (129 aa).

In terms of domain architecture, Lipoyl-binding spans 24–106 (SYTVGITEHA…YGEGWFFRVM (83 aa)). At K65 the chain carries N6-lipoyllysine.

The protein belongs to the GcvH family. As to quaternary structure, the glycine cleavage system is composed of four proteins: P, T, L and H. (R)-lipoate is required as a cofactor.

Functionally, the glycine cleavage system catalyzes the degradation of glycine. The H protein shuttles the methylamine group of glycine from the P protein to the T protein. The sequence is that of Glycine cleavage system H protein from Shewanella baltica (strain OS155 / ATCC BAA-1091).